Here is a 344-residue protein sequence, read N- to C-terminus: Ribosomal RNA large subunit methyltransferase Cfr (344 aa).

Glu90 (proton acceptor) is an active-site residue. Positions 97-330 (KQGWESFCIS…ATVRTQFGSE (234 aa)) constitute a Radical SAM core domain. Cys104 and Cys335 are oxidised to a cystine. [4Fe-4S] cluster contacts are provided by Cys111, Cys115, and Cys118. Residues 157–158 (GE), Ser188, 211–213 (SLH), and Asn292 contribute to the S-adenosyl-L-methionine site. The active-site S-methylcysteine intermediate is Cys335.

This sequence belongs to the radical SAM superfamily. RlmN family. Cfr subfamily. The cofactor is [4Fe-4S] cluster.

The protein resides in the cytoplasm. It carries out the reaction adenosine(2503) in 23S rRNA + 2 reduced [2Fe-2S]-[ferredoxin] + 2 S-adenosyl-L-methionine = 8-methyladenosine(2503) in 23S rRNA + 5'-deoxyadenosine + L-methionine + 2 oxidized [2Fe-2S]-[ferredoxin] + S-adenosyl-L-homocysteine. Its function is as follows. Specifically methylates position 8 of adenine 2503 in 23S rRNA. Confers resistance to some classes of antibiotics. The chain is Ribosomal RNA large subunit methyltransferase Cfr from Clostridium botulinum (strain Okra / Type B1).